The sequence spans 270 residues: Acyl-[acyl-carrier-protein]--UDP-N-acetylglucosamine O-acyltransferase (270 aa).

This sequence belongs to the transferase hexapeptide repeat family. LpxA subfamily. Homotrimer.

It localises to the cytoplasm. The enzyme catalyses a (3R)-hydroxyacyl-[ACP] + UDP-N-acetyl-alpha-D-glucosamine = a UDP-3-O-[(3R)-3-hydroxyacyl]-N-acetyl-alpha-D-glucosamine + holo-[ACP]. Its pathway is glycolipid biosynthesis; lipid IV(A) biosynthesis; lipid IV(A) from (3R)-3-hydroxytetradecanoyl-[acyl-carrier-protein] and UDP-N-acetyl-alpha-D-glucosamine: step 1/6. Its function is as follows. Involved in the biosynthesis of lipid A, a phosphorylated glycolipid that anchors the lipopolysaccharide to the outer membrane of the cell. The polypeptide is Acyl-[acyl-carrier-protein]--UDP-N-acetylglucosamine O-acyltransferase (Helicobacter pylori (strain G27)).